Here is a 205-residue protein sequence, read N- to C-terminus: Thymidylate kinase (205 aa).

11 to 18 (GLDKSGKT) contributes to the ATP binding site.

It belongs to the thymidylate kinase family. In terms of assembly, homodimer; the dimer arrangement is orthogonal and not antiparallel as in human enzyme.

The catalysed reaction is dTMP + ATP = dTDP + ADP. Its pathway is pyrimidine metabolism; dTTP biosynthesis. Functionally, poxvirus TMP kinase is able to phosphorylate dTMP, dUMP and also dGMP from any purine and pyrimidine nucleoside triphosphate. The large substrate specificity is explained by the presence of a canal connecting the edge of the dimer interface to the TMP base binding pocket, canal not found in the human homolog. The polypeptide is Thymidylate kinase (OPG178) (Homo sapiens (Human)).